We begin with the raw amino-acid sequence, 284 residues long: 4-hydroxybenzoate octaprenyltransferase (284 aa).

Transmembrane regions (helical) follow at residues 19-39 (IGSL…AQGL), 42-62 (LRVL…GCVI), 93-113 (LLLF…MNTL), 114-134 (TIQL…MKRF), 136-156 (HLPQ…AWAA), 158-178 (ANTL…WTIA), 210-230 (IIGL…QGLA), 233-253 (TSYY…QHLI), and 264-284 (AFLN…LSVW).

It belongs to the UbiA prenyltransferase family. Mg(2+) serves as cofactor.

The protein resides in the cell inner membrane. It catalyses the reaction all-trans-octaprenyl diphosphate + 4-hydroxybenzoate = 4-hydroxy-3-(all-trans-octaprenyl)benzoate + diphosphate. Its pathway is cofactor biosynthesis; ubiquinone biosynthesis. In terms of biological role, catalyzes the prenylation of para-hydroxybenzoate (PHB) with an all-trans polyprenyl group. Mediates the second step in the final reaction sequence of ubiquinone-8 (UQ-8) biosynthesis, which is the condensation of the polyisoprenoid side chain with PHB, generating the first membrane-bound Q intermediate 3-octaprenyl-4-hydroxybenzoate. The protein is 4-hydroxybenzoate octaprenyltransferase of Vibrio cholerae serotype O1 (strain ATCC 39541 / Classical Ogawa 395 / O395).